A 429-amino-acid chain; its full sequence is Glutamate-1-semialdehyde 2,1-aminomutase 1 (429 aa).

K268 carries the post-translational modification N6-(pyridoxal phosphate)lysine.

The protein belongs to the class-III pyridoxal-phosphate-dependent aminotransferase family. HemL subfamily. As to quaternary structure, homodimer. Pyridoxal 5'-phosphate serves as cofactor.

The protein resides in the cytoplasm. It carries out the reaction (S)-4-amino-5-oxopentanoate = 5-aminolevulinate. The protein operates within porphyrin-containing compound metabolism; protoporphyrin-IX biosynthesis; 5-aminolevulinate from L-glutamyl-tRNA(Glu): step 2/2. This is Glutamate-1-semialdehyde 2,1-aminomutase 1 from Lysinibacillus sphaericus (strain C3-41).